We begin with the raw amino-acid sequence, 468 residues long: RuvB-like helicase 2 (468 aa).

76-83 (GPPSTGKT) contacts ATP.

It belongs to the RuvB family. In terms of assembly, may form heterododecamers with RVB1. Component of the SWR1 chromatin remodeling complex, the INO80 chromatin remodeling complex, and of the R2TP complex.

It is found in the nucleus. The enzyme catalyses ATP + H2O = ADP + phosphate + H(+). Its function is as follows. DNA helicase which participates in several chromatin remodeling complexes, including the SWR1 and the INO80 complexes. The SWR1 complex mediates the ATP-dependent exchange of histone H2A for the H2A variant HZT1 leading to transcriptional regulation of selected genes by chromatin remodeling. The INO80 complex remodels chromatin by shifting nucleosomes and is involved in DNA repair. Also involved in pre-rRNA processing. The sequence is that of RuvB-like helicase 2 (rvb2) from Emericella nidulans (strain FGSC A4 / ATCC 38163 / CBS 112.46 / NRRL 194 / M139) (Aspergillus nidulans).